The primary structure comprises 185 residues: Ribosome-recycling factor (185 aa).

It belongs to the RRF family.

The protein resides in the cytoplasm. Its function is as follows. Responsible for the release of ribosomes from messenger RNA at the termination of protein biosynthesis. May increase the efficiency of translation by recycling ribosomes from one round of translation to another. The chain is Ribosome-recycling factor from Geobacillus sp. (strain WCH70).